The following is a 689-amino-acid chain: Elongation factor G (689 aa).

In terms of domain architecture, tr-type G spans 8 to 282; it reads DKVRNIGIMA…AIVRYLPSPL (275 aa). GTP is bound by residues 17-24, 81-85, and 135-138; these read AHIDAGKT, DTPGH, and NKMD.

Belongs to the TRAFAC class translation factor GTPase superfamily. Classic translation factor GTPase family. EF-G/EF-2 subfamily.

The protein resides in the cytoplasm. Its function is as follows. Catalyzes the GTP-dependent ribosomal translocation step during translation elongation. During this step, the ribosome changes from the pre-translocational (PRE) to the post-translocational (POST) state as the newly formed A-site-bound peptidyl-tRNA and P-site-bound deacylated tRNA move to the P and E sites, respectively. Catalyzes the coordinated movement of the two tRNA molecules, the mRNA and conformational changes in the ribosome. This is Elongation factor G from Thermoanaerobacter pseudethanolicus (strain ATCC 33223 / 39E) (Clostridium thermohydrosulfuricum).